Reading from the N-terminus, the 1077-residue chain is Carbamoyl phosphate synthase large chain (1077 aa).

Positions 1–403 are carboxyphosphate synthetic domain; that stretch reads MPKRTDIQSI…SLHKALRGLE (403 aa). ATP is bound by residues R129, R169, G175, G176, E208, L210, E215, G241, I242, H243, Q285, and E299. Residues 133 to 328 enclose the ATP-grasp 1 domain; the sequence is DKAMKSIGLE…IAKIAAKLAV (196 aa). Mg(2+) is bound by residues Q285, E299, and N301. Residues Q285, E299, and N301 each coordinate Mn(2+). The oligomerization domain stretch occupies residues 404 to 553; it reads VGATGFDEMV…YSSYDDECEA (150 aa). The segment at 554 to 935 is carbamoyl phosphate synthetic domain; it reads NPTDKEKIMV…AYAKAELGCG (382 aa). The ATP-grasp 2 domain maps to 678–869; it reads QQAVDRLGLL…LAKIAARVMA (192 aa). Residues R714, R753, L755, E760, G785, V786, H787, S788, Q828, and E840 each contribute to the ATP site. Mg(2+) is bound by residues Q828, E840, and N842. Residues Q828, E840, and N842 each coordinate Mn(2+). The MGS-like domain occupies 936-1077; it reads NVYPEGGRAL…HAQVQASLKA (142 aa). Residues 936 to 1077 form an allosteric domain region; the sequence is NVYPEGGRAL…HAQVQASLKA (142 aa).

It belongs to the CarB family. In terms of assembly, composed of two chains; the small (or glutamine) chain promotes the hydrolysis of glutamine to ammonia, which is used by the large (or ammonia) chain to synthesize carbamoyl phosphate. Tetramer of heterodimers (alpha,beta)4. It depends on Mg(2+) as a cofactor. Mn(2+) is required as a cofactor.

The enzyme catalyses hydrogencarbonate + L-glutamine + 2 ATP + H2O = carbamoyl phosphate + L-glutamate + 2 ADP + phosphate + 2 H(+). It catalyses the reaction hydrogencarbonate + NH4(+) + 2 ATP = carbamoyl phosphate + 2 ADP + phosphate + 2 H(+). It functions in the pathway amino-acid biosynthesis; L-arginine biosynthesis; carbamoyl phosphate from bicarbonate: step 1/1. Its pathway is pyrimidine metabolism; UMP biosynthesis via de novo pathway; (S)-dihydroorotate from bicarbonate: step 1/3. Large subunit of the glutamine-dependent carbamoyl phosphate synthetase (CPSase). CPSase catalyzes the formation of carbamoyl phosphate from the ammonia moiety of glutamine, carbonate, and phosphate donated by ATP, constituting the first step of 2 biosynthetic pathways, one leading to arginine and/or urea and the other to pyrimidine nucleotides. The large subunit (synthetase) binds the substrates ammonia (free or transferred from glutamine from the small subunit), hydrogencarbonate and ATP and carries out an ATP-coupled ligase reaction, activating hydrogencarbonate by forming carboxy phosphate which reacts with ammonia to form carbamoyl phosphate. In Vibrio vulnificus (strain CMCP6), this protein is Carbamoyl phosphate synthase large chain.